We begin with the raw amino-acid sequence, 403 residues long: Tryptophan synthase beta chain (403 aa).

An N6-(pyridoxal phosphate)lysine modification is found at K96.

The protein belongs to the TrpB family. As to quaternary structure, tetramer of two alpha and two beta chains. The cofactor is pyridoxal 5'-phosphate.

It catalyses the reaction (1S,2R)-1-C-(indol-3-yl)glycerol 3-phosphate + L-serine = D-glyceraldehyde 3-phosphate + L-tryptophan + H2O. It functions in the pathway amino-acid biosynthesis; L-tryptophan biosynthesis; L-tryptophan from chorismate: step 5/5. Functionally, the beta subunit is responsible for the synthesis of L-tryptophan from indole and L-serine. In Ralstonia nicotianae (strain ATCC BAA-1114 / GMI1000) (Ralstonia solanacearum), this protein is Tryptophan synthase beta chain.